A 570-amino-acid polypeptide reads, in one-letter code: Mitogen-activated protein kinase 11 (570 aa).

One can recognise a Protein kinase domain in the interval 26–317; it reads YEVLEVIGKG…AQEALADPYF (292 aa). Residues 32 to 40 and lysine 55 each bind ATP; that span reads IGKGSYGLV. Residue aspartate 152 is the Proton acceptor of the active site. At threonine 188 the chain carries Phosphothreonine. The TXY motif lies at 188–190; the sequence is TDY. The residue at position 190 (tyrosine 190) is a Phosphotyrosine.

Belongs to the protein kinase superfamily. CMGC Ser/Thr protein kinase family. MAP kinase subfamily. Post-translationally, dually phosphorylated on Thr-188 and Tyr-190, which activates the enzyme.

The enzyme catalyses L-seryl-[protein] + ATP = O-phospho-L-seryl-[protein] + ADP + H(+). The catalysed reaction is L-threonyl-[protein] + ATP = O-phospho-L-threonyl-[protein] + ADP + H(+). Activated by threonine and tyrosine phosphorylation. The chain is Mitogen-activated protein kinase 11 (MPK11) from Oryza sativa subsp. japonica (Rice).